Here is a 450-residue protein sequence, read N- to C-terminus: Glucose-6-phosphate isomerase (450 aa).

Glu-291 acts as the Proton donor in catalysis. Active-site residues include His-312 and Lys-426.

It belongs to the GPI family.

It localises to the cytoplasm. The catalysed reaction is alpha-D-glucose 6-phosphate = beta-D-fructose 6-phosphate. It participates in carbohydrate biosynthesis; gluconeogenesis. Its pathway is carbohydrate degradation; glycolysis; D-glyceraldehyde 3-phosphate and glycerone phosphate from D-glucose: step 2/4. Catalyzes the reversible isomerization of glucose-6-phosphate to fructose-6-phosphate. In Clostridium botulinum (strain Hall / ATCC 3502 / NCTC 13319 / Type A), this protein is Glucose-6-phosphate isomerase.